The sequence spans 264 residues: 5'-nucleotidase SurE (264 aa).

4 residues coordinate a divalent metal cation: D8, D9, S39, and N95.

This sequence belongs to the SurE nucleotidase family. A divalent metal cation is required as a cofactor.

Its subcellular location is the cytoplasm. It catalyses the reaction a ribonucleoside 5'-phosphate + H2O = a ribonucleoside + phosphate. In terms of biological role, nucleotidase that shows phosphatase activity on nucleoside 5'-monophosphates. The polypeptide is 5'-nucleotidase SurE (Syntrophomonas wolfei subsp. wolfei (strain DSM 2245B / Goettingen)).